We begin with the raw amino-acid sequence, 632 residues long: Probable potassium transport system protein Kup (632 aa).

Helical transmembrane passes span 19 to 39 (LLCL…PLYV), 57 to 77 (VIGI…LKYV), 111 to 131 (ILFL…VITP), 147 to 167 (PLLQ…LFML), 175 to 195 (IGAL…LVGL), 213 to 233 (AFAF…AVVL), 257 to 277 (WYGG…ALLL), 286 to 306 (PFFL…ATAA), 347 to 367 (IYIP…VLGF), 376 to 396 (AYGV…FFVL), 404 to 424 (FLLG…FFSA), and 429 to 449 (VAQG…IMIT).

Belongs to the HAK/KUP transporter (TC 2.A.72) family.

It localises to the cell inner membrane. It catalyses the reaction K(+)(in) + H(+)(in) = K(+)(out) + H(+)(out). In terms of biological role, transport of potassium into the cell. Likely operates as a K(+):H(+) symporter. The sequence is that of Probable potassium transport system protein Kup from Nitrosospira multiformis (strain ATCC 25196 / NCIMB 11849 / C 71).